The primary structure comprises 162 residues: UPF0262 protein HNE_1347 (162 aa).

The protein belongs to the UPF0262 family.

This is UPF0262 protein HNE_1347 from Hyphomonas neptunium (strain ATCC 15444).